The primary structure comprises 1529 residues: DNA-directed RNA polymerase subunit beta' (1529 aa).

Zn(2+)-binding residues include C156, C158, C183, and C186. Mg(2+) contacts are provided by D1328, D1330, and D1332.

The protein belongs to the RNA polymerase beta' chain family. RpoC1 subfamily. In plastids the minimal PEP RNA polymerase catalytic core is composed of four subunits: alpha, beta, beta', and beta''. When a (nuclear-encoded) sigma factor is associated with the core the holoenzyme is formed, which can initiate transcription. Mg(2+) serves as cofactor. Requires Zn(2+) as cofactor.

Its subcellular location is the plastid. The protein resides in the chloroplast. The enzyme catalyses RNA(n) + a ribonucleoside 5'-triphosphate = RNA(n+1) + diphosphate. DNA-dependent RNA polymerase catalyzes the transcription of DNA into RNA using the four ribonucleoside triphosphates as substrates. The chain is DNA-directed RNA polymerase subunit beta' from Tetradesmus obliquus (Green alga).